Consider the following 531-residue polypeptide: Polyamine aminopropyltransferase 1 (531 aa).

Helical transmembrane passes span 27–47 (FLLL…ELAL), 59–79 (VLQT…GSLA), 96–116 (GVLA…FAWL), 122–142 (AMIV…PLLM), 160–180 (MFAV…LFLL), 188–208 (GALV…VFIF), and 218–238 (AGLL…YVLA). A spermidine synthase region spans residues 205-476 (VFIFRRQTGR…VLARPGTEAP (272 aa)). A PABS domain is found at 233–471 (TTYVLADDLE…GNWGFVLARP (239 aa)). Position 263 (glutamine 263) interacts with S-methyl-5'-thioadenosine. Spermidine-binding residues include histidine 298 and aspartate 320. S-methyl-5'-thioadenosine-binding positions include glutamate 340 and 374 to 375 (DA). Aspartate 392 serves as the catalytic Proton acceptor.

This sequence belongs to the spermidine/spermine synthase family. In terms of assembly, homodimer or homotetramer.

It localises to the cell membrane. It catalyses the reaction S-adenosyl 3-(methylsulfanyl)propylamine + putrescine = S-methyl-5'-thioadenosine + spermidine + H(+). It participates in amine and polyamine biosynthesis; spermidine biosynthesis; spermidine from putrescine: step 1/1. Its function is as follows. Catalyzes the irreversible transfer of a propylamine group from the amino donor S-adenosylmethioninamine (decarboxy-AdoMet) to putrescine (1,4-diaminobutane) to yield spermidine. This chain is Polyamine aminopropyltransferase 1, found in Streptomyces coelicolor (strain ATCC BAA-471 / A3(2) / M145).